Reading from the N-terminus, the 1036-residue chain is MSLKSEHRVNTSALQKIAADMSNLIDNLDTRELHFEGEEVEFDTSPGDPKAQEKYIPFSSIYNTQGFKEPNIQTYLSGCPIKAQVLEVERFTSTTRVPSINLYTIELTHGEFTWQVKRKFKHFQEFHRELLKYKAFIRIPIPTKRHTFRRQNVKEEPREMPSLPRSSENTIQEEQFFGRRKQLEDYLTKILKMPMYRNYHATTEFLDVSQLSFIHDLGPKGLEGMIMKRSGGHRIPGLNCCGQGRACYRWSKRWLIVKDSFLLYMKPDSGAIAFVLLVDKEFRIKVGRKETETKYGLRIDNLSRTLILKCNSYRHARWWGGAIEEFIQKHGSDFLKDHRFGSYAAVHENMLAKWYVNAKGYFEDIANAMEEAAEEIFITDWWLSPEIFLKRPVVEGNRWRLDCILKRKAQQGVRIFIMLYKEVELALGINSEYSKRTLMRLHPNIKVMRHPDHVSSSVYLWAHHEKLVIIDQSVAFVGGIDLAYGRWDDNEHRLTDVGSVKRVTSGLSMGSLAAATMESMESLSLKDNHRSHKNEPILKSVDDVDPKLKGVGKPRKFSKFSLYRQLHRRHLHNSDSVSSIDSASNTGSIRSVQTGVGELHGETRFWHGKDYCNFVFKDWVQLDKPFADFIDRYSTPRIPWHDIGSVLHGKAARDVARHFIQRWNFTKIMKPKYRSLSYPFLLPKSQSTAHELRYQVPGAVPAKVQLLRSAADWSAGIKHHEESIHSAYINVIENSKHYIYIENQFFISCADDKVVFNKVGDAIAQRILKAHREGQRYRVYIVIPRLPGFEGDISTGGGNALQAIMHFNYRTMCRGENSILGQLKPELGNQWINYISFCGLRTHAELEGNLVTELIYVHSKLLIADDNTVIIGSANINDRSMLGKRDSEMAVIVQDTETVPSIMDGKEYQAGCFAQGLRLQCFRLVLGYLSDPSEDLQDPVSDKFFKEIWVSTAARNATIYDKVFRCLPNDEVHNLMQLRDFISKPILAKDDPIRAEEELRKIRGFLVQFPFYFLSEENLLPSVGTKEAIVPMEVWT.

A PX domain is found at 81 to 212; that stretch reads IKAQVLEVER…TEFLDVSQLS (132 aa). The PH domain occupies 219-328; it reads PKGLEGMIMK…WGGAIEEFIQ (110 aa). S-palmitoyl cysteine attachment occurs at residues Cys-240 and Cys-241. A PLD phosphodiesterase 1 domain is found at 459 to 486; it reads YLWAHHEKLVIIDQSVAFVGGIDLAYGR. Residues 463 to 890 form a catalytic region; that stretch reads HHEKLVIIDQ…MLGKRDSEMA (428 aa). Phosphoserine occurs at positions 499, 561, and 591. In terms of domain architecture, PLD phosphodiesterase 2 spans 853 to 880; that stretch reads ELIYVHSKLLIADDNTVIIGSANINDRS.

The protein belongs to the phospholipase D family. Interacts with PIP5K1B.

It is found in the cytoplasm. It localises to the perinuclear region. The protein resides in the endoplasmic reticulum membrane. The protein localises to the golgi apparatus membrane. Its subcellular location is the late endosome membrane. It catalyses the reaction a 1,2-diacyl-sn-glycero-3-phosphocholine + H2O = a 1,2-diacyl-sn-glycero-3-phosphate + choline + H(+). Stimulated by phosphatidylinositol 4,5-bisphosphate and phosphatidylinositol 3,4,5-trisphosphate, activated by the phosphokinase C-alpha, by the ADP-ribosylation factor-1 (ARF-1), and to a lesser extent by GTP-binding proteins: RHO A, RAC-1 and CDC42. Its function is as follows. Implicated as a critical step in numerous cellular pathways, including signal transduction, membrane trafficking, and the regulation of mitosis. May be involved in the regulation of perinuclear intravesicular membrane traffic. This chain is Phospholipase D1 (PLD1), found in Cricetulus griseus (Chinese hamster).